The following is a 130-amino-acid chain: Albumin-1 A (130 aa).

The N-terminal stretch at Met-1–Ala-26 is a signal peptide. 3 cysteine pairs are disulfide-bonded: Cys-29-Cys-46, Cys-33-Cys-48, and Cys-41-Cys-58. 2 consecutive propeptides follow at residues Val-64–Asn-69 and Leu-123–Ala-130.

In terms of processing, the C-terminal glycine may be removed from PA1b. In terms of tissue distribution, major component of both the cotyledons and embryonic axes of mature seeds.

PA1b binds to basic 7S globulin (BG) and stimulates its phosphorylation activity. Involved in the signal transduction system to regulate the growth and differentiation as a hormone peptide. Toxic to various insects through binding to a high affinity binding site in the insect gut. In Pisum sativum (Garden pea), this protein is Albumin-1 A.